A 121-amino-acid polypeptide reads, in one-letter code: Structural protein p14.5 (121 aa).

Disordered regions lie at residues methionine 1–leucine 24 and threonine 84–lysine 121. N-acetylalanine; by host is present on alanine 2. The span at lysine 104–lysine 121 shows a compositional bias: basic residues.

This sequence belongs to the asfivirus structural protein p14.5 family. As to quaternary structure, interacts with the major capsid protein. Interacts with host IRF3; this interaction interferes with the recruitment of IRF3 to TBK1. In terms of processing, acetylated.

Its subcellular location is the virion. Its function is as follows. Structural protein required for transport of intracellular particles from the assembly sites to the plasma membrane. Binds to both ssDNA and dsDNA. Suppressed the activation of the cGAS/STING pathway by interfering with the recruitment of IRF3 to TBK1, which in turn suppresses IRF3 phosphorylation, decreasing interferon production. The sequence is that of Structural protein p14.5 from Ornithodoros (relapsing fever ticks).